We begin with the raw amino-acid sequence, 396 residues long: Elongation factor Tu 1 (396 aa).

Residues 10–206 (KPHVNIGTIG…AVDEYIPTPE (197 aa)) enclose the tr-type G domain. Residues 19–26 (GHVDHGKT) form a G1 region. Residue 19–26 (GHVDHGKT) coordinates GTP. Residue Thr-26 coordinates Mg(2+). The G2 stretch occupies residues 60–64 (GITIN). Residues 81-84 (DCPG) form a G3 region. GTP-binding positions include 81 to 85 (DCPGH) and 136 to 139 (NKVD). The tract at residues 136 to 139 (NKVD) is G4. The segment at 174–176 (SAL) is G5.

Belongs to the TRAFAC class translation factor GTPase superfamily. Classic translation factor GTPase family. EF-Tu/EF-1A subfamily. As to quaternary structure, monomer.

Its subcellular location is the cytoplasm. The enzyme catalyses GTP + H2O = GDP + phosphate + H(+). Functionally, GTP hydrolase that promotes the GTP-dependent binding of aminoacyl-tRNA to the A-site of ribosomes during protein biosynthesis. This is Elongation factor Tu 1 from Hyphomonas neptunium (strain ATCC 15444).